Here is a 283-residue protein sequence, read N- to C-terminus: Arylamine N-acetyltransferase (283 aa).

Cys70 serves as the catalytic Acyl-thioester intermediate. Residues His110 and Asp127 contribute to the active site.

It belongs to the arylamine N-acetyltransferase family. Homodimer and homotetramer.

The catalysed reaction is an arylamine + acetyl-CoA = an N-acetylarylamine + CoA. Catalyzes the transfer of the acetyl group from acetyl coenzyme A to the free amino group of arylamines and hydrazines. Is able to utilize not only acetyl-CoA, but also n-propionyl-CoA and acetoacetyl-CoA as acyl donors, although at a lower rate. As acetyl-CoA and propionyl-CoA are products of cholesterol catabolism and the nat gene is likely present in the same operon than genes involved in cholesterol degradation, this enzyme could have a role in the utilization and regulation of these CoA species. In Mycobacterium bovis (strain ATCC BAA-935 / AF2122/97), this protein is Arylamine N-acetyltransferase (nat).